Consider the following 117-residue polypeptide: uncharacterized protein (117 aa).

This is an uncharacterized protein from Acheta domesticus (House cricket).